Reading from the N-terminus, the 380-residue chain is Chaperone protein DnaJ (380 aa).

The 66-residue stretch at 5–70 folds into the J domain; that stretch reads DYYEVLGVSK…QKRQTYDQYG (66 aa). The CR-type zinc-finger motif lies at 136-214; it reads GKEVEIKIPT…CHGQGRVEKT (79 aa). Positions 149, 152, 166, 169, 188, 191, 202, and 205 each coordinate Zn(2+). CXXCXGXG motif repeat units lie at residues 149–156, 166–173, 188–195, and 202–209; these read CDPCDGSG, CTTCHGAG, CPTCQGQG, and CDSCHGQG.

The protein belongs to the DnaJ family. As to quaternary structure, homodimer. It depends on Zn(2+) as a cofactor.

The protein resides in the cytoplasm. Participates actively in the response to hyperosmotic and heat shock by preventing the aggregation of stress-denatured proteins and by disaggregating proteins, also in an autonomous, DnaK-independent fashion. Unfolded proteins bind initially to DnaJ; upon interaction with the DnaJ-bound protein, DnaK hydrolyzes its bound ATP, resulting in the formation of a stable complex. GrpE releases ADP from DnaK; ATP binding to DnaK triggers the release of the substrate protein, thus completing the reaction cycle. Several rounds of ATP-dependent interactions between DnaJ, DnaK and GrpE are required for fully efficient folding. Also involved, together with DnaK and GrpE, in the DNA replication of plasmids through activation of initiation proteins. The chain is Chaperone protein DnaJ from Pseudoalteromonas translucida (strain TAC 125).